The following is a 313-amino-acid chain: tRNA-cytidine(32) 2-sulfurtransferase (313 aa).

Residues 54–59 carry the PP-loop motif motif; it reads SGGKDS. Residues Cys-129, Cys-132, and Cys-220 each contribute to the [4Fe-4S] cluster site.

It belongs to the TtcA family. As to quaternary structure, homodimer. The cofactor is Mg(2+). [4Fe-4S] cluster is required as a cofactor.

It is found in the cytoplasm. The catalysed reaction is cytidine(32) in tRNA + S-sulfanyl-L-cysteinyl-[cysteine desulfurase] + AH2 + ATP = 2-thiocytidine(32) in tRNA + L-cysteinyl-[cysteine desulfurase] + A + AMP + diphosphate + H(+). Its pathway is tRNA modification. Catalyzes the ATP-dependent 2-thiolation of cytidine in position 32 of tRNA, to form 2-thiocytidine (s(2)C32). The sulfur atoms are provided by the cysteine/cysteine desulfurase (IscS) system. This Methylibium petroleiphilum (strain ATCC BAA-1232 / LMG 22953 / PM1) protein is tRNA-cytidine(32) 2-sulfurtransferase.